The following is a 250-amino-acid chain: ATP synthase subunit a (250 aa).

The next 6 helical transmembrane spans lie at 31-51 (SAYM…GMAG), 85-105 (FFPL…IGII), 115-135 (LIVT…YGLY), 144-164 (LFVP…IEVI), 194-214 (FVGM…LPLG), and 217-237 (VAVT…FTIL).

It belongs to the ATPase A chain family. F-type ATPases have 2 components, CF(1) - the catalytic core - and CF(0) - the membrane proton channel. CF(1) has five subunits: alpha(3), beta(3), gamma(1), delta(1), epsilon(1). CF(0) has four main subunits: a, b, b' and c.

The protein localises to the cell inner membrane. In terms of biological role, key component of the proton channel; it plays a direct role in the translocation of protons across the membrane. The protein is ATP synthase subunit a of Rhodopseudomonas palustris (strain BisB5).